Reading from the N-terminus, the 121-residue chain is Large ribosomal subunit protein uL18 (121 aa).

It belongs to the universal ribosomal protein uL18 family. As to quaternary structure, part of the 50S ribosomal subunit; part of the 5S rRNA/L5/L18/L25 subcomplex. Contacts the 5S and 23S rRNAs.

Its function is as follows. This is one of the proteins that bind and probably mediate the attachment of the 5S RNA into the large ribosomal subunit, where it forms part of the central protuberance. In Burkholderia multivorans (strain ATCC 17616 / 249), this protein is Large ribosomal subunit protein uL18.